The sequence spans 22 residues: Phospholipase A2 (22 aa).

This sequence belongs to the phospholipase A2 family. Group II subfamily. Ca(2+) is required as a cofactor. Post-translationally, seven disulfide bonds are present. As to expression, expressed by the venom gland.

The protein localises to the secreted. It catalyses the reaction a 1,2-diacyl-sn-glycero-3-phosphocholine + H2O = a 1-acyl-sn-glycero-3-phosphocholine + a fatty acid + H(+). Functionally, snake venom phospholipase A2 (PLA2) that inhibits neuromuscular transmission by blocking acetylcholine release from the nerve termini. PLA2 catalyzes the calcium-dependent hydrolysis of the 2-acyl groups in 3-sn-phosphoglycerides. The polypeptide is Phospholipase A2 (Daboia siamensis (Eastern Russel's viper)).